We begin with the raw amino-acid sequence, 349 residues long: Bifunctional nitrilase/nitrile hydratase NIT4A (349 aa).

The CN hydrolase domain occupies 29 to 301; that stretch reads VRATVVQAST…EALISADLDL (273 aa). E69 serves as the catalytic Proton acceptor. K156 is a catalytic residue. C190 acts as the Nucleophile in catalysis.

The protein belongs to the carbon-nitrogen hydrolase superfamily. Nitrilase family. In terms of tissue distribution, ubiquitous.

The catalysed reaction is L-asparagine = 3-cyano-L-alanine + H2O. It carries out the reaction 3-cyano-L-alanine + 2 H2O = L-aspartate + NH4(+). Involved in the cyanide detoxification pathway. Has nitrilase and nitrile-hydratase activity in the ratio 4.0:1, producing both asparagine and aspartic acid from beta-cyano-L-alanine (Ala(CN)). Can also use 3-phenylpropionitrile as substrate, but not indole-3-acetonitrile. The sequence is that of Bifunctional nitrilase/nitrile hydratase NIT4A (NIT4A) from Lupinus angustifolius (Narrow-leaved blue lupine).